Here is a 300-residue protein sequence, read N- to C-terminus: Free fatty acid receptor 1 (300 aa).

At 1–8 (MALSPQLF) the chain is on the extracellular side. A helical membrane pass occupies residues 9–31 (FALYVSAFALGFPLNLLAIRGAV). The Cytoplasmic segment spans residues 32–41 (ARARLRLTPN). Residues 42-64 (LVYTLHLACSDLLLAITLPVKAV) traverse the membrane as a helical segment. Topologically, residues 65-79 (EALASGAWPLPLPLC) are extracellular. Residues Cys-79 and Cys-170 are joined by a disulfide bond. Residues 80–101 (PVFVLVHFAPLYAGGGFLAALS) form a helical membrane-spanning segment. At 102-121 (AGRYLGAAFPFGYQAVRRPR) the chain is on the cytoplasmic side. A helical membrane pass occupies residues 122-142 (YSWGVCVAIWALVLCHMGLVL). At 143-178 (GLEAPGGWLNTTSSSLGINTPVNGSPVCLEAWDPNS) the chain is on the extracellular side. Residue Asn-152 is glycosylated (N-linked (GlcNAc...) asparagine). Residues 179 to 200 (ARPARLSFSILLFFVPLVITAF) form a helical membrane-spanning segment. Residues 201 to 223 (CYVGCLRALAHSGLSHKRKLRAA) are Cytoplasmic-facing. The chain crosses the membrane as a helical span at residues 224 to 248 (WAAGGAFLTLLLCLGPYNASNVASF). The Extracellular segment spans residues 249–256 (VNPDLGGS). A helical membrane pass occupies residues 257–279 (WRKLGLITGSWSVVLNPLVTGYL). The Cytoplasmic portion of the chain corresponds to 280 to 300 (GASPGRGTVCTTRTQGGTIQK).

Belongs to the G-protein coupled receptor 1 family.

The protein resides in the cell membrane. G-protein coupled receptor for medium and long chain saturated and unsaturated fatty acids that plays an important role in glucose homeostasis. Fatty acid binding increases glucose-stimulated insulin secretion, and may also enhance the secretion of glucagon-like peptide 1 (GLP-1). May also play a role in bone homeostasis; receptor signaling activates pathways that inhibit osteoclast differentiation. Ligand binding leads to a conformation change that triggers signaling via G-proteins that activate phospholipase C, leading to an increase of the intracellular calcium concentration. Seems to act through a G(q) and G(i)-mediated pathway. Mediates the anti-inflammatory effects of omega-3 polyunsaturated fatty acids (PUFAs) via inhibition of NLRP3 inflammasome activation. In Mesocricetus auratus (Golden hamster), this protein is Free fatty acid receptor 1 (FFAR1).